The primary structure comprises 157 residues: Probable succinate transporter subunit YjjB (157 aa).

Helical transmembrane passes span 8–28 (LALA…AMVF), 50–70 (MILM…SMLV), 87–107 (VFTV…TAMI), and 129–149 (FLTA…PGLW).

Belongs to the ThrE exporter (TC 2.A.79) family. The transporter is composed of YjjB and YjjP.

Its subcellular location is the cell inner membrane. Involved in succinate export with YjjP. Both proteins are required for export. This Escherichia coli O127:H6 (strain E2348/69 / EPEC) protein is Probable succinate transporter subunit YjjB.